The following is a 512-amino-acid chain: Maturase K (512 aa).

This sequence belongs to the intron maturase 2 family. MatK subfamily.

Its subcellular location is the plastid. The protein resides in the chloroplast. In terms of biological role, usually encoded in the trnK tRNA gene intron. Probably assists in splicing its own and other chloroplast group II introns. This chain is Maturase K, found in Acer campestre (Field maple).